Here is a 250-residue protein sequence, read N- to C-terminus: MPLWELWFFLLALFLAWLTPPGNGNEGSMAGSCPCNRRISSHSPPTDHDMRHLRKYLNHYQHCTSYVRFQLPRGSVCGGSSDQWVLKLMGCFDRGECGRAHARTVAHQQHLAPQNTRVPELPERAPPDSSTPAQTNLPSTLQPTQKPTLPEGMPSLAKKLIPTSETDTSTVGHSLGAKSEARENQEQLGKNVGATAGTSALVPVLSLLVIIFLLTGVLLYVMCKKRQEQSRQYPPDPQLHYVPVASNINT.

The signal sequence occupies residues 1–24 (MPLWELWFFLLALFLAWLTPPGNG). The Extracellular segment spans residues 25-200 (NEGSMAGSCP…NVGATAGTSA (176 aa)). 2 cysteine pairs are disulfide-bonded: Cys-33–Cys-63 and Cys-35–Cys-77. Positions 105 to 186 (VAHQQHLAPQ…AKSEARENQE (82 aa)) are disordered. 2 stretches are compositionally biased toward polar residues: residues 128–147 (DSSTPAQTNLPSTLQPTQKP) and 163–172 (TSETDTSTVG). Residues 201–221 (LVPVLSLLVIIFLLTGVLLYV) traverse the membrane as a helical segment. Residues 222-250 (MCKKRQEQSRQYPPDPQLHYVPVASNINT) lie on the Cytoplasmic side of the membrane.

This sequence belongs to the intercrine alpha (chemokine CxC) family. In terms of processing, glycosylated.

Its subcellular location is the membrane. Its function is as follows. Induces a strong chemotactic response. Induces calcium mobilization. Binds to CXCR6/Bonzo. Also acts as a scavenger receptor on macrophages, which specifically binds to OxLDL (oxidized low density lipoprotein), suggesting that it may be involved in pathophysiology such as atherogenesis. The polypeptide is C-X-C motif chemokine 16 (CXCL16) (Sus scrofa (Pig)).